We begin with the raw amino-acid sequence, 841 residues long: ATP-dependent helicase Lhr-Core (841 aa).

Residues glutamine 39, lysine 62, threonine 63, aspartate 181, glutamate 182, isoleucine 352, arginine 369, and histidine 372 each contribute to the ATP site. In terms of domain architecture, Helicase ATP-binding spans 43–234 (IKEIHEGKNV…FLVGNGRDCY (192 aa)). The DEVH box motif lies at 181-184 (DEIH). Positions 266 to 416 (RLYNLLKKLI…RIHIPKNCLD (151 aa)) constitute a Helicase C-terminal domain. The segment at 417-500 (VLAQHLVGMA…IYYMNVGTIP (84 aa)) is WH domain. Positions 501–841 (DETAVDVIAD…MEFISMKGKK (341 aa)) are domain 4.

It belongs to the Lhr helicase family. Lhr-Core subfamily. As to quaternary structure, monomer.

The catalysed reaction is Couples ATP hydrolysis with the unwinding of duplex DNA by translocating in the 3'-5' direction.. The enzyme catalyses ATP + H2O = ADP + phosphate + H(+). Its function is as follows. DNA helicase that loads on single-stranded (ss)DNA and translocates in a 3'-5' direction, probably involved in DNA repair. Archaeal orthologs have double-stranded (ds)DNA and/or RNA:DNA helicase activity. This chain is ATP-dependent helicase Lhr-Core, found in Methanocaldococcus jannaschii (strain ATCC 43067 / DSM 2661 / JAL-1 / JCM 10045 / NBRC 100440) (Methanococcus jannaschii).